A 157-amino-acid polypeptide reads, in one-letter code: Small ribosomal subunit protein uS7 (157 aa).

This sequence belongs to the universal ribosomal protein uS7 family. As to quaternary structure, part of the 30S ribosomal subunit. Contacts proteins S9 and S11.

In terms of biological role, one of the primary rRNA binding proteins, it binds directly to 16S rRNA where it nucleates assembly of the head domain of the 30S subunit. Is located at the subunit interface close to the decoding center, probably blocks exit of the E-site tRNA. The chain is Small ribosomal subunit protein uS7 from Chlamydia trachomatis serovar A (strain ATCC VR-571B / DSM 19440 / HAR-13).